We begin with the raw amino-acid sequence, 132 residues long: Ribosome-binding factor A (132 aa).

The protein belongs to the RbfA family. As to quaternary structure, monomer. Binds 30S ribosomal subunits, but not 50S ribosomal subunits or 70S ribosomes.

The protein resides in the cytoplasm. Functionally, one of several proteins that assist in the late maturation steps of the functional core of the 30S ribosomal subunit. Associates with free 30S ribosomal subunits (but not with 30S subunits that are part of 70S ribosomes or polysomes). Required for efficient processing of 16S rRNA. May interact with the 5'-terminal helix region of 16S rRNA. This Treponema denticola (strain ATCC 35405 / DSM 14222 / CIP 103919 / JCM 8153 / KCTC 15104) protein is Ribosome-binding factor A.